A 259-amino-acid chain; its full sequence is Taurine import ATP-binding protein TauB (259 aa).

Residues 4 to 233 (LELERISAQY…RYAAGESARA (230 aa)) form the ABC transporter domain. 38-45 (GPSGSGKT) serves as a coordination point for ATP.

The protein belongs to the ABC transporter superfamily. Taurine importer (TC 3.A.1.17.1) family. The complex is composed of two ATP-binding proteins (TauB), two transmembrane proteins (TauC) and a solute-binding protein (TauA).

The protein localises to the cell inner membrane. The catalysed reaction is taurine(out) + ATP + H2O = taurine(in) + ADP + phosphate + H(+). Its function is as follows. Part of the ABC transporter complex TauABC involved in taurine import. Responsible for energy coupling to the transport system. This chain is Taurine import ATP-binding protein TauB, found in Pseudomonas entomophila (strain L48).